Reading from the N-terminus, the 259-residue chain is Heat-labile enterotoxin IIA, A chain (259 aa).

Residues 1–18 (MIKHVLLFFVFISFSVSA) form the signal peptide. Residue 23 to 37 (RADSRTPDEIRRAGG) coordinates NAD(+). Glutamate 128 is an active-site residue. Cysteine 203 and cysteine 215 are joined by a disulfide.

This sequence belongs to the enterotoxin A family. In terms of assembly, heterohexamer of one A chain and of five B chains.

Its function is as follows. The biological activity of the toxin is produced by the A chain, which activates intracellular adenyl cyclase. In Escherichia coli, this protein is Heat-labile enterotoxin IIA, A chain.